Here is a 266-residue protein sequence, read N- to C-terminus: Cysteine-rich repeat secretory protein 41 (266 aa).

The signal sequence occupies residues 1-26 (MSSVFGSVHILAMIAIQLLLTHSVSS). Gnk2-homologous domains lie at 33-136 (YLHH…SVAS) and 142-253 (YEND…LYPF).

It belongs to the cysteine-rich repeat secretory protein family.

Its subcellular location is the secreted. The protein is Cysteine-rich repeat secretory protein 41 (CRRSP41) of Arabidopsis thaliana (Mouse-ear cress).